Reading from the N-terminus, the 52-residue chain is uncharacterized protein (52 aa).

This is an uncharacterized protein from Halalkalibacterium halodurans (strain ATCC BAA-125 / DSM 18197 / FERM 7344 / JCM 9153 / C-125) (Bacillus halodurans).